A 197-amino-acid chain; its full sequence is dITP/XTP pyrophosphatase (197 aa).

Residue Thr8–Lys13 coordinates substrate. Positions 40 and 69 each coordinate Mg(2+). Catalysis depends on Asp69, which acts as the Proton acceptor. Substrate is bound by residues Ser70, Phe154–Asp157, Lys177, and His182–Arg183.

This sequence belongs to the HAM1 NTPase family. As to quaternary structure, homodimer. The cofactor is Mg(2+).

The enzyme catalyses XTP + H2O = XMP + diphosphate + H(+). It catalyses the reaction dITP + H2O = dIMP + diphosphate + H(+). It carries out the reaction ITP + H2O = IMP + diphosphate + H(+). Its function is as follows. Pyrophosphatase that catalyzes the hydrolysis of nucleoside triphosphates to their monophosphate derivatives, with a high preference for the non-canonical purine nucleotides XTP (xanthosine triphosphate), dITP (deoxyinosine triphosphate) and ITP. Seems to function as a house-cleaning enzyme that removes non-canonical purine nucleotides from the nucleotide pool, thus preventing their incorporation into DNA/RNA and avoiding chromosomal lesions. The chain is dITP/XTP pyrophosphatase from Pectobacterium atrosepticum (strain SCRI 1043 / ATCC BAA-672) (Erwinia carotovora subsp. atroseptica).